The following is a 345-amino-acid chain: Methionine import ATP-binding protein MetN (345 aa).

The ABC transporter domain occupies 2–241; that stretch reads IKLNNITKIF…PKTELAQEFI (240 aa). 38–45 provides a ligand contact to ATP; it reads GASGAGKS.

It belongs to the ABC transporter superfamily. Methionine importer (TC 3.A.1.24) family. As to quaternary structure, the complex is composed of two ATP-binding proteins (MetN), two transmembrane proteins (MetI) and a solute-binding protein (MetQ).

It localises to the cell inner membrane. It catalyses the reaction L-methionine(out) + ATP + H2O = L-methionine(in) + ADP + phosphate + H(+). The enzyme catalyses D-methionine(out) + ATP + H2O = D-methionine(in) + ADP + phosphate + H(+). In terms of biological role, part of the ABC transporter complex MetNIQ involved in methionine import. Responsible for energy coupling to the transport system. This is Methionine import ATP-binding protein MetN from Haemophilus influenzae (strain 86-028NP).